The sequence spans 363 residues: Pyrimidine monooxygenase RutA (363 aa).

FMN-binding positions include 49-50 (IK), Asn-115, Glu-124, 140-141 (RY), and Ser-190.

The protein belongs to the NtaA/SnaA/DszA monooxygenase family. RutA subfamily.

The catalysed reaction is uracil + FMNH2 + NADH + O2 = (Z)-3-ureidoacrylate + FMN + NAD(+) + H2O + H(+). It catalyses the reaction thymine + FMNH2 + NADH + O2 = (Z)-2-methylureidoacrylate + FMN + NAD(+) + H2O + H(+). Functionally, catalyzes the pyrimidine ring opening between N-3 and C-4 by an unusual flavin hydroperoxide-catalyzed mechanism, adding oxygen atoms in the process to yield ureidoacrylate peracid, that immediately reacts with FMN forming ureidoacrylate and FMN-N(5)-oxide. The FMN-N(5)-oxide reacts spontaneously with NADH to produce FMN. Requires the flavin reductase RutF to regenerate FMN in vivo. This is Pyrimidine monooxygenase RutA from Klebsiella pneumoniae (strain 342).